Consider the following 403-residue polypeptide: Chorismate synthase (403 aa).

Positions 40 and 46 each coordinate NADP(+). Residues 140-142 (RSS), 261-262 (QA), glycine 305, 320-324 (KPIST), and arginine 346 contribute to the FMN site.

It belongs to the chorismate synthase family. As to quaternary structure, homotetramer. Requires FMNH2 as cofactor.

The catalysed reaction is 5-O-(1-carboxyvinyl)-3-phosphoshikimate = chorismate + phosphate. Its pathway is metabolic intermediate biosynthesis; chorismate biosynthesis; chorismate from D-erythrose 4-phosphate and phosphoenolpyruvate: step 7/7. Catalyzes the anti-1,4-elimination of the C-3 phosphate and the C-6 proR hydrogen from 5-enolpyruvylshikimate-3-phosphate (EPSP) to yield chorismate, which is the branch point compound that serves as the starting substrate for the three terminal pathways of aromatic amino acid biosynthesis. This reaction introduces a second double bond into the aromatic ring system. The chain is Chorismate synthase from Corynebacterium diphtheriae (strain ATCC 700971 / NCTC 13129 / Biotype gravis).